The following is a 740-amino-acid chain: Elongation factor 2 (740 aa).

A tr-type G domain is found at 23 to 264 (AQIRNAGTLA…MIIEHVPPPN (242 aa)). GTP-binding positions include 32 to 39 (AHVDHGKT), 98 to 102 (DTPGH), and 152 to 155 (NKID). Diphthamide is present on H605.

The protein belongs to the TRAFAC class translation factor GTPase superfamily. Classic translation factor GTPase family. EF-G/EF-2 subfamily.

The protein resides in the cytoplasm. Its function is as follows. Catalyzes the GTP-dependent ribosomal translocation step during translation elongation. During this step, the ribosome changes from the pre-translocational (PRE) to the post-translocational (POST) state as the newly formed A-site-bound peptidyl-tRNA and P-site-bound deacylated tRNA move to the P and E sites, respectively. Catalyzes the coordinated movement of the two tRNA molecules, the mRNA and conformational changes in the ribosome. This chain is Elongation factor 2, found in Pyrobaculum calidifontis (strain DSM 21063 / JCM 11548 / VA1).